A 350-amino-acid chain; its full sequence is MERHIRYDAASRSLILLDQRYLPTREEDFVCRNTDDIVTALQVMVVRGAPAIGVTAAWGCVLAAYETAESGMETWRPVLDGLIERIANARPTAVNLRWAVERMRAAWHSLGRADLATLITYWTNEAKRIHRDDIAINRRMGEHGAELIDDGDAVMTHCNAGALATAGYGTALGVIRGAVEAGKNITVIANETRPFLQGARLTAFELHEDGIPVTVACDNACGLLMKRGMVQKVVVGADRIAANGDAANKIGTYSVALLAREHGIPFYVAAPLSTIDRETPDGDHIPIENRTPTEVTHVGATQITPDGVPVFNFAFDVTPAHLIAGIVTEMGVLRAPYRESIAEAFRKAGL.

Substrate contacts are provided by residues 47–49 (RGA), Arg90, and Gln197. Asp238 serves as the catalytic Proton donor. 248 to 249 (NK) provides a ligand contact to substrate.

It belongs to the eIF-2B alpha/beta/delta subunits family. MtnA subfamily.

It catalyses the reaction 5-(methylsulfanyl)-alpha-D-ribose 1-phosphate = 5-(methylsulfanyl)-D-ribulose 1-phosphate. The protein operates within amino-acid biosynthesis; L-methionine biosynthesis via salvage pathway; L-methionine from S-methyl-5-thio-alpha-D-ribose 1-phosphate: step 1/6. Functionally, catalyzes the interconversion of methylthioribose-1-phosphate (MTR-1-P) into methylthioribulose-1-phosphate (MTRu-1-P). The protein is Methylthioribose-1-phosphate isomerase of Nitratidesulfovibrio vulgaris (strain DP4) (Desulfovibrio vulgaris).